Reading from the N-terminus, the 156-residue chain is Cellulose synthase operon protein D (156 aa).

The protein operates within glycan metabolism; bacterial cellulose biosynthesis. Functionally, may have a major role in the perfection of crystallization, involved either in the pore structure itself or in the organization of the pores within the linear array of terminal synthesizing complexes (TCs). This Komagataeibacter xylinus (Gluconacetobacter xylinus) protein is Cellulose synthase operon protein D (acsD).